A 331-amino-acid chain; its full sequence is Adenosine deaminase (331 aa).

Zn(2+)-binding residues include H12 and H14. 3 residues coordinate substrate: H14, D16, and G170. H197 provides a ligand contact to Zn(2+). E200 serves as the catalytic Proton donor. D278 contacts Zn(2+).

This sequence belongs to the metallo-dependent hydrolases superfamily. Adenosine and AMP deaminases family. Adenosine deaminase subfamily. Zn(2+) serves as cofactor.

The enzyme catalyses adenosine + H2O + H(+) = inosine + NH4(+). It carries out the reaction 2'-deoxyadenosine + H2O + H(+) = 2'-deoxyinosine + NH4(+). Catalyzes the hydrolytic deamination of adenosine and 2-deoxyadenosine. The polypeptide is Adenosine deaminase (Vibrio vulnificus (strain YJ016)).